Consider the following 148-residue polypeptide: UPF0756 membrane protein NMCC_1816 (148 aa).

The next 4 helical transmembrane spans lie at Leu-13–Met-35, His-50–Gly-70, Phe-80–Gly-100, and Val-121–Leu-141.

This sequence belongs to the UPF0756 family.

It localises to the cell membrane. The protein is UPF0756 membrane protein NMCC_1816 of Neisseria meningitidis serogroup C (strain 053442).